The following is a 141-amino-acid chain: Stage V sporulation protein AB (141 aa).

4 helical membrane-spanning segments follow: residues 7 to 27, 45 to 65, 75 to 95, and 115 to 135; these read FIIF…VAFL, FVQA…WETL, WIAV…AAAL, and IIIL…FHWL.

The protein resides in the cell membrane. The polypeptide is Stage V sporulation protein AB (spoVAB) (Bacillus subtilis (strain 168)).